The following is a 95-amino-acid chain: Glutaredoxin 1 (95 aa).

One can recognise a Glutaredoxin domain in the interval 1–95 (MNKSILHTII…DKLLEHQPKN (95 aa)). Residues cysteine 17 and cysteine 20 are joined by a disulfide bond.

This sequence belongs to the glutaredoxin family. As to quaternary structure, monomer.

The protein resides in the cytoplasm. Has a glutathione-disulfide oxidoreductase activity in the presence of NADPH and glutathione reductase. Reduces low molecular weight disulfides and proteins. The chain is Glutaredoxin 1 (grxC1) from Rickettsia prowazekii (strain Madrid E).